The chain runs to 88 residues: Large ribosomal subunit protein uL29 (88 aa).

Belongs to the universal ribosomal protein uL29 family.

The sequence is that of Large ribosomal subunit protein uL29 (rpl29) from Sulfurisphaera tokodaii (strain DSM 16993 / JCM 10545 / NBRC 100140 / 7) (Sulfolobus tokodaii).